The following is a 1370-amino-acid chain: Reverse gyrase 1 (1370 aa).

An RG N-terminal-type zinc finger spans residues 6–47; it reads AASRGVYRYLCPNCGGPNSEERLSRGLPCPRCLPRLPRKGVS. Residues Cys16, Cys19, Cys34, and Cys37 each contribute to the Zn(2+) site. ATP contacts are provided by residues Gln95 and 112–119; that span reads APTGVGKT. In terms of domain architecture, Helicase ATP-binding spans 99 to 287; that stretch reads AKRLARGDSF…RKKLLEVKRR (189 aa). The DEAD box signature appears at 220 to 223; the sequence is DDVD. Residues 643 to 1370 are topoisomerase I; sequence ELVRTALLVV…VSRVWGAGVG (728 aa). The Toprim domain occupies 647–825; that stretch reads TALLVVESPN…DIKRLEFHEV (179 aa). Glu653 contributes to the Mg(2+) binding site. Residues 744-772 form an RG C-terminal-type zinc finger; that stretch reads IKRCLDCGYQFVDEASRCPRCGSELIRNS. Zn(2+) contacts are provided by Cys747, Cys750, Cys761, and Cys764. Asp794 provides a ligand contact to Mg(2+). Residues 841–1323 form the Topo IA-type catalytic domain; that stretch reads DDNLVDAQVV…SVFNEISDLA (483 aa). Residue Tyr1028 is the O-(5'-phospho-DNA)-tyrosine intermediate of the active site.

It in the N-terminal section; belongs to the DEAD box helicase family. DDVD subfamily. The protein in the C-terminal section; belongs to the type IA topoisomerase family. In terms of assembly, monomer. Zn(2+) serves as cofactor. Mg(2+) is required as a cofactor.

It is found in the cytoplasm. It catalyses the reaction ATP + H2O = ADP + phosphate + H(+). Functionally, modifies the topological state of DNA by introducing positive supercoils in an ATP-dependent process, increasing the linking number in steps of +1. Binds to single-stranded DNA, transiently cleaves and then rejoins the ends, introducing a positive supercoil in the process. The scissile phosphodiester is attacked by the catalytic tyrosine of the enzyme, resulting in the formation of a DNA-(5'-phosphotyrosyl)-enzyme intermediate. Probably involved in rewinding DNA strands in regions of the chromosome that have opened up to allow replication, transcription, DNA repair and/or for DNA protection. The sequence is that of Reverse gyrase 1 from Aeropyrum pernix (strain ATCC 700893 / DSM 11879 / JCM 9820 / NBRC 100138 / K1).